A 525-amino-acid chain; its full sequence is GMP synthase [glutamine-hydrolyzing] (525 aa).

One can recognise a Glutamine amidotransferase type-1 domain in the interval 9–207 (RILILDFGSQ…VRDICQCEAL (199 aa)). Catalysis depends on C86, which acts as the Nucleophile. Catalysis depends on residues H181 and E183. Residues 208-400 (WTPAKIIDDA…LGLPYDMLYR (193 aa)) form the GMPS ATP-PPase domain. An ATP-binding site is contributed by 235–241 (SGGVDSS).

As to quaternary structure, homodimer.

It carries out the reaction XMP + L-glutamine + ATP + H2O = GMP + L-glutamate + AMP + diphosphate + 2 H(+). The protein operates within purine metabolism; GMP biosynthesis; GMP from XMP (L-Gln route): step 1/1. Its function is as follows. Catalyzes the synthesis of GMP from XMP. The polypeptide is GMP synthase [glutamine-hydrolyzing] (Salmonella arizonae (strain ATCC BAA-731 / CDC346-86 / RSK2980)).